A 216-amino-acid chain; its full sequence is Glutathione S-transferase 1, isoform B (216 aa).

One can recognise a GST N-terminal domain in the interval 1-80; sequence MDFYYLPGSA…YLVEKYGKPC (80 aa). Glutathione contacts are provided by residues Ser-9, 50–52, and 64–66; these read HCV and ESR. Positions 89 to 210 constitute a GST C-terminal domain; the sequence is DPQKRAIVNQ…RSWAEAARPF (122 aa).

This sequence belongs to the GST superfamily. Theta family. As to quaternary structure, homodimer.

It carries out the reaction RX + glutathione = an S-substituted glutathione + a halide anion + H(+). Functionally, conjugation of reduced glutathione to a wide number of exogenous and endogenous hydrophobic electrophiles. This Anopheles gambiae (African malaria mosquito) protein is Glutathione S-transferase 1, isoform B.